We begin with the raw amino-acid sequence, 310 residues long: Beta-ketoacyl-[acyl-carrier-protein] synthase III 1 (310 aa).

Residues Cys-112 and His-235 contribute to the active site. The interval 236–240 (QANIR) is ACP-binding. Asn-265 is an active-site residue.

This sequence belongs to the thiolase-like superfamily. FabH family. In terms of assembly, homodimer.

It localises to the cytoplasm. The catalysed reaction is malonyl-[ACP] + acetyl-CoA + H(+) = 3-oxobutanoyl-[ACP] + CO2 + CoA. The protein operates within lipid metabolism; fatty acid biosynthesis. Its function is as follows. Catalyzes the condensation reaction of fatty acid synthesis by the addition to an acyl acceptor of two carbons from malonyl-ACP. Catalyzes the first condensation reaction which initiates fatty acid synthesis and may therefore play a role in governing the total rate of fatty acid production. Possesses both acetoacetyl-ACP synthase and acetyl transacylase activities. Its substrate specificity determines the biosynthesis of branched-chain and/or straight-chain of fatty acids. The polypeptide is Beta-ketoacyl-[acyl-carrier-protein] synthase III 1 (Bacillus cereus (strain ATCC 14579 / DSM 31 / CCUG 7414 / JCM 2152 / NBRC 15305 / NCIMB 9373 / NCTC 2599 / NRRL B-3711)).